The following is a 383-amino-acid chain: uncharacterized protein (383 aa).

Belongs to the peptidase M20 family.

This is an uncharacterized protein from Staphylococcus epidermidis (strain ATCC 35984 / DSM 28319 / BCRC 17069 / CCUG 31568 / BM 3577 / RP62A).